Consider the following 356-residue polypeptide: Glucose 1-dehydrogenase (356 aa).

Positions 1 to 26 are disordered; sequence MDAIVVSKADRTPRLVDRPRPDPTPG. The segment covering 8-21 has biased composition (basic and acidic residues); the sequence is KADRTPRLVDRPRP. Zn(2+) is bound at residue Asp-38. Thr-40 contributes to the substrate binding site. Zn(2+) is bound by residues His-63 and Glu-64. A disordered region spans residues 86–107; it reads TVRRPRGDPTPQFDRGQPDMAA. The substrate site is built by Glu-113 and Glu-149. Glu-149 lines the Zn(2+) pocket. Residues 180 to 183, 205 to 206, 270 to 272, and 300 to 302 each bind NADP(+); these read NGSL, RR, LGV, and SVN. Residue Asn-302 coordinates substrate.

Belongs to the zinc-containing alcohol dehydrogenase family. Glucose 1-dehydrogenase subfamily. It depends on Zn(2+) as a cofactor.

The enzyme catalyses D-glucose + NAD(+) = D-glucono-1,5-lactone + NADH + H(+). It catalyses the reaction D-glucose + NADP(+) = D-glucono-1,5-lactone + NADPH + H(+). Its function is as follows. Catalyzes the NAD(P)(+)-dependent oxidation of D-glucose to D-gluconate via gluconolactone. Can utilize both NAD(+) and NADP(+) as electron acceptor. Is involved in the degradation of glucose through a modified Entner-Doudoroff pathway. This chain is Glucose 1-dehydrogenase, found in Halobacterium salinarum (strain ATCC 700922 / JCM 11081 / NRC-1) (Halobacterium halobium).